The sequence spans 603 residues: DNA mismatch repair protein MutL (603 aa).

This sequence belongs to the DNA mismatch repair MutL/HexB family.

This protein is involved in the repair of mismatches in DNA. It is required for dam-dependent methyl-directed DNA mismatch repair. May act as a 'molecular matchmaker', a protein that promotes the formation of a stable complex between two or more DNA-binding proteins in an ATP-dependent manner without itself being part of a final effector complex. This chain is DNA mismatch repair protein MutL, found in Sphingopyxis alaskensis (strain DSM 13593 / LMG 18877 / RB2256) (Sphingomonas alaskensis).